Reading from the N-terminus, the 113-residue chain is U10-theraphotoxin-Hs2a (113 aa).

The signal sequence occupies residues 1 to 21; sequence MNTVRVTFLLVFVLAVSLGQA. The propeptide occupies 22-67; that stretch reads DEDGNRMEKRQKKTEAENLLLPKLEELDAKLWEEDSVESRNSRQKR. 3 disulfides stabilise this stretch: Cys68–Cys86, Cys75–Cys91, and Cys85–Cys106.

It belongs to the neurotoxin 14 (magi-1) family. 02 (HWTX-XVIc) subfamily. Expressed by the venom gland.

Its subcellular location is the secreted. Probable ion channel inhibitor. The protein is U10-theraphotoxin-Hs2a of Cyriopagopus schmidti (Chinese bird spider).